We begin with the raw amino-acid sequence, 961 residues long: Thrombospondin-4 (961 aa).

A signal peptide spans 1–23 (MLAPRGATFLLLHLALQPWLGAG). Residues 24-192 (AQATPQVFDL…LEELKLVVRG (169 aa)) form the Laminin G-like domain. The EGF-like 1 domain maps to 286–325 (PVRRCDSNPCFRGVRCTDTRDGFQCGPCPEGYTGNGIVCS). Disulfide bonds link Cys-290/Cys-301, Cys-295/Cys-310, Cys-313/Cys-324, Cys-330/Cys-341, Cys-335/Cys-350, Cys-353/Cys-377, Cys-383/Cys-394, Cys-388/Cys-403, Cys-406/Cys-418, Cys-424/Cys-438, Cys-432/Cys-448, Cys-450/Cys-461, Cys-477/Cys-482, Cys-487/Cys-507, Cys-523/Cys-543, Cys-546/Cys-566, Cys-582/Cys-602, Cys-605/Cys-625, Cys-643/Cys-663, Cys-683/Cys-703, and Cys-719/Cys-940. Positions 326 to 363 (DVDECRYHPCYPGVRCVNLAPGFRCDACPVGFTGPMMQ) constitute an EGF-like 2; calcium-binding domain. The 41-residue stretch at 379–419 (DIDECRNGACVLNSICINTLGSYRCGPCKPGYIGDQMRGCK) folds into the EGF-like 3; calcium-binding domain. The EGF-like 4 domain maps to 420–462 (MERNCRDPELNPCSVNAQCIEERQGDVTCVCGVGWAGDGYICG). 8 TSP type-3 repeats span residues 463–495 (KDVDIDSYPDEELPCSARNCKKDNCKYVPNSGQ), 496–531 (EDADRDGIGDACDDDADGDGILNEQDNCVLTHNVDQ), 532–554 (RNSDKDIFGDACDNCRNVLNNDQ), 555–590 (KDTDGDGKGDACDDDMDGDGIKNILDNCQKVPNSDQ), 591–613 (EDRDGDGVGDACDSCPEVSNPNQ), 614–651 (SDVDNDLVGDSCDTNQDSDGDGHQDSTDNCPTVINSAQ), 652–691 (LDTDKDGIGDECDDDDDNDGIPDLVPPGPDNCRLVPNPAQ), and 692–727 (EDSNSDGVGDICEADFDQDQVIDRIDVCPENAEVTL). Residues 562-564 (KGD) carry the Cell attachment site motif. The tract at residues 581–671 (NCQKVPNSDQ…ECDDDDDNDG (91 aa)) is disordered. N-linked (GlcNAc...) asparagine glycosylation occurs at Asn-612. Positions 640-652 (TDNCPTVINSAQL) are enriched in polar residues. Residues 660-671 (GDECDDDDDNDG) show a composition bias toward acidic residues. One can recognise a TSP C-terminal domain in the interval 731-945 (RAYQTVVLDP…LKYRCNDTIP (215 aa)). Asn-941 carries N-linked (GlcNAc...) asparagine glycosylation.

It belongs to the thrombospondin family. In terms of assembly, homopentamer; disulfide-linked. Interacts with PTBP3. Interacts (via EGF-like 3; calcium-binding domain) with ATF6 and facilitates its processing, activation and nuclear translocation. Interacts with NOTCH1.

It localises to the endoplasmic reticulum. It is found in the sarcoplasmic reticulum. Its subcellular location is the secreted. The protein localises to the extracellular space. The protein resides in the extracellular matrix. Functionally, adhesive glycoprotein that mediates cell-to-cell and cell-to-matrix interactions and is involved in various processes including cellular proliferation, migration, adhesion and attachment, inflammatory response to CNS injury, regulation of vascular inflammation and adaptive responses of the heart to pressure overload and in myocardial function and remodeling. Binds to structural extracellular matrix (ECM) proteins and modulates the ECM in response to tissue damage, contributing to cardioprotective and adaptive ECM remodeling. Plays a role in ER stress response, via its interaction with the activating transcription factor 6 alpha (ATF6) which produces adaptive ER stress response factors and protects myocardium from pressure overload. May contribute to spinal presynaptic hypersensitivity and neuropathic pain states after peripheral nerve injury. May play a role in regulating protective astrogenesis from the subventricular zone (SVZ) niche after injury in a NOTCH1-dependent manner. The sequence is that of Thrombospondin-4 (THBS4) from Bos taurus (Bovine).